Here is a 177-residue protein sequence, read N- to C-terminus: NADH-quinone oxidoreductase subunit B (177 aa).

Positions 56, 57, 121, and 151 each coordinate [4Fe-4S] cluster.

It belongs to the complex I 20 kDa subunit family. In terms of assembly, NDH-1 is composed of 14 different subunits. Subunits NuoB, C, D, E, F, and G constitute the peripheral sector of the complex. It depends on [4Fe-4S] cluster as a cofactor.

Its subcellular location is the cell inner membrane. The catalysed reaction is a quinone + NADH + 5 H(+)(in) = a quinol + NAD(+) + 4 H(+)(out). Functionally, NDH-1 shuttles electrons from NADH, via FMN and iron-sulfur (Fe-S) centers, to quinones in the respiratory chain. The immediate electron acceptor for the enzyme in this species is believed to be ubiquinone. Couples the redox reaction to proton translocation (for every two electrons transferred, four hydrogen ions are translocated across the cytoplasmic membrane), and thus conserves the redox energy in a proton gradient. The chain is NADH-quinone oxidoreductase subunit B from Rhodobacter capsulatus (Rhodopseudomonas capsulata).